The following is a 78-amino-acid chain: Acyl carrier protein (78 aa).

The region spanning 2–77 (SDTADRVKKI…DAIKYIDENK (76 aa)) is the Carrier domain. Position 37 is an O-(pantetheine 4'-phosphoryl)serine (S37).

The protein belongs to the acyl carrier protein (ACP) family. Post-translationally, 4'-phosphopantetheine is transferred from CoA to a specific serine of apo-ACP by AcpS. This modification is essential for activity because fatty acids are bound in thioester linkage to the sulfhydryl of the prosthetic group.

It localises to the cytoplasm. Its pathway is lipid metabolism; fatty acid biosynthesis. Carrier of the growing fatty acid chain in fatty acid biosynthesis. The protein is Acyl carrier protein of Novosphingobium aromaticivorans (strain ATCC 700278 / DSM 12444 / CCUG 56034 / CIP 105152 / NBRC 16084 / F199).